The sequence spans 61 residues: Japonicin-1CDYa (61 aa).

The signal sequence occupies residues 1 to 22; that stretch reads MFTLKKSLLLLFFLGVINVSLC. The propeptide occupies 23-45; the sequence is EEERDADEEERRDDPEERDVEVE. An intrachain disulfide couples Cys-55 to Cys-61.

Belongs to the frog skin active peptide (FSAP) family. Brevinin subfamily. Expressed by the skin glands.

It is found in the secreted. In terms of biological role, antimicrobial peptide. Has low activity against the Gram-positive bacterium S.aureus (MIC&gt;100 uM) and the Gram-negative bacterium E.coli (MIC=25 uM). Lacks hemolytic activity against human erythrocytes. The polypeptide is Japonicin-1CDYa (Rana dybowskii (Dybovsky's frog)).